A 243-amino-acid polypeptide reads, in one-letter code: tRNA1(Val) (adenine(37)-N6)-methyltransferase (243 aa).

Belongs to the methyltransferase superfamily. tRNA (adenine-N(6)-)-methyltransferase family.

The protein localises to the cytoplasm. The catalysed reaction is adenosine(37) in tRNA1(Val) + S-adenosyl-L-methionine = N(6)-methyladenosine(37) in tRNA1(Val) + S-adenosyl-L-homocysteine + H(+). Its function is as follows. Specifically methylates the adenine in position 37 of tRNA(1)(Val) (anticodon cmo5UAC). This is tRNA1(Val) (adenine(37)-N6)-methyltransferase from Shewanella woodyi (strain ATCC 51908 / MS32).